We begin with the raw amino-acid sequence, 503 residues long: 5'-3' exonuclease PLD4 (503 aa).

Residues 1–36 (MDKKKEHPEMRIPLQTAVEVSDWPCSTSHDPHSGLG) lie on the Cytoplasmic side of the membrane. The chain crosses the membrane as a signal-anchor for type II membrane protein span at residues 37–57 (MVLGMLAVLGLSSVTLILFLW). Over 58-503 (QGATSFTSHR…RQVPSQDCVW (446 aa)) the chain is Lumenal. N89, N148, and N169 each carry an N-linked (GlcNAc...) asparagine glycan. C92 and C248 form a disulfide bridge. The 28-residue stretch at 207-234 (TGGVLHSKFWVVDGRHIYVGSANMDWRS) folds into the PLD phosphodiesterase 1 domain. Catalysis depends on residues H212, K214, and D219. The Proton donor role is filled by H212. 4 N-linked (GlcNAc...) asparagine glycosylation sites follow: N247, N279, N415, and N425. Cysteines 377 and 501 form a disulfide. The PLD phosphodiesterase 2 domain maps to 421–447 (FSRVNHSKFMVTDKTAYVGTSNWSEDY). Active-site residues include H426, K428, and D433. H426 acts as the Nucleophile in catalysis. N-linked (GlcNAc...) asparagine glycosylation occurs at N442.

The protein belongs to the phospholipase D family. Post-translationally, highly N-glycosylated. Enriched in the white matter of early postnatal brains, as well as in splenic marginal zone cells. Highly expressed in dendritic cells (DCs) and other myeloid cells, with lower expression in B cell.

It localises to the endoplasmic reticulum membrane. Its subcellular location is the golgi apparatus. The protein resides in the trans-Golgi network membrane. The protein localises to the nucleus. It is found in the early endosome. It localises to the cytoplasmic vesicle. Its subcellular location is the phagosome. The protein resides in the lysosome. The catalysed reaction is Exonucleolytic cleavage in the 5'- to 3'-direction to yield nucleoside 3'-phosphates.. The enzyme catalyses a 5'-end 5'-dephospho-ribonucleotidyl-ribonucleotide-RNA + H2O = a ribonucleoside 3'-phosphate + a 5'-end dephospho-ribonucleoside-RNA + H(+). It catalyses the reaction a ribonucleoside 3'-phosphate-2'-3'-cyclophospho-GMP + H2O = a ribonucleoside 3'-phosphate + 2',3'-cyclophospho-GMP + H(+). It carries out the reaction a 5'-end 5'-dephospho-2'-deoxyribonucleotidyl-2'-deoxyribonucleotide in single-stranded DNA + H2O = a 5'-end dephospho-2'-deoxyribonucleoside in single-stranded DNA + a 2'-deoxyribonucleoside 3'-phosphate + H(+). The catalysed reaction is a 5'-end 5'-phospho-2'-deoxyribonucleotide in single-stranded DNA + H2O = a 5'-end 5'-dephospho-2'-deoxyribonucleotide in single-stranded DNA + phosphate. The enzyme catalyses a 3-lyso-sn-glycero-1-phospho-(3'-acyl-1'-sn-glycerol) + a 1-acyl-sn-glycerol = a 3-acyl-sn-glycero-1-phospho-(3'-acyl-1'-sn-glycerol) + glycerol. It catalyses the reaction 3-lyso-sn-glycero-1-phospho-(3'-(9Z-octadecenoyl)-1'-sn-glycerol) + 1-(9Z-octadecenoyl)-sn-glycerol = 3-(9Z-octadecenoyl)-sn-glycero-1-phospho-(3'-(9Z-octadecenoyl)-1'-sn-glycerol) + glycerol. With respect to regulation, the exonuclease activity toward ssDNA substrate is Ca(2+) and Mg(2+)-independent, but it is inhibited by Fe(2+), Cu(2+) and to a lesser extent Zn(2+) ions. 5'-&gt;3' exonuclease that hydrolyzes the phosphodiester bond of single-stranded DNA (ssDNA) and RNA molecules to form nucleoside 3'-monophosphates and 5'-end 5'-hydroxy deoxyribonucleotide/ribonucleotide fragments. Partially redundant with PLD4, can cleave all four nucleotides displaying higher efficiency for ssDNA and RNA fragments initiated with uridine and guanosine residues and lower efficiency for cytidine-initiated substrates. As a result, it does not always degrade polynucleotides to the single nucleotide level, it can stall at specific sites sparing certain fragments from exonucleolytic degradation. Processes self and pathogenic ssDNA and RNA molecules that reach the endolysosomal compartment via phagocytosis or autophagy and may serve as 'danger' signals for recognition by innate immune receptors such as toll-like receptors (TLRs). Degrades mitochondrial CpG-rich ssDNA fragments to prevent TLR9 activation and autoinflammatory response, but it can cleave viral RNA to generate ligands for TLR7 activation and initiate antiviral immune responses. In plasmacytoid dendritic cells, it cooperates with endonuclease RNASET2 to release 2',3'-cyclic guanosine monophosphate (2',3'-cGMP), a potent stimulatory ligand for TLR7. Produces 2',3'-cGMPs and cytidine-rich RNA fragments that occupy TLR7 ligand-binding pockets and trigger a signaling-competent state. Can exert polynucleotide phosphatase activity toward 5'-phosphorylated ssDNA substrates although at a slow rate. Transphosphatidylase that catalyzes the exchange with R to S stereo-inversion of the glycerol moiety between (S,R)-lysophosphatidylglycerol (LPG) and monoacylglycerol (MAG) substrates to yield (S,S)-bis(monoacylglycero)phosphate (BMP). Can synthesize a variety of (S,S)-BMPs representing the main phospholipid constituent of lysosomal intralumenal vesicle (ILV) membranes that bind acid hydrolases for lipid degradation. Regulates the homeostasis and interorganellar communication of the endolysosomal system with an overall impact on cellular removal of dysfunctional organelles via autophagy as well as proper protein and lipid turnover. May play a role in myotube formation in response to ER stress. The sequence is that of 5'-3' exonuclease PLD4 from Mus musculus (Mouse).